Consider the following 459-residue polypeptide: Ribulose bisphosphate carboxylase (459 aa).

Residue Asn111 coordinates substrate. The Proton acceptor role is filled by Lys166. A substrate-binding site is contributed by Lys168. Positions 191, 193, and 194 each coordinate Mg(2+). Lys191 bears the N6-carboxylysine mark. His287 acts as the Proton acceptor in catalysis. The substrate site is built by Arg288, His321, and Ser368.

The protein belongs to the RuBisCO large chain family. Type II subfamily. As to quaternary structure, homodimer. It depends on Mg(2+) as a cofactor.

The catalysed reaction is 2 (2R)-3-phosphoglycerate + 2 H(+) = D-ribulose 1,5-bisphosphate + CO2 + H2O. The enzyme catalyses D-ribulose 1,5-bisphosphate + O2 = 2-phosphoglycolate + (2R)-3-phosphoglycerate + 2 H(+). Functionally, ruBisCO catalyzes two reactions: the carboxylation of D-ribulose 1,5-bisphosphate, the primary event in carbon dioxide fixation, as well as the oxidative fragmentation of the pentose substrate. Both reactions occur simultaneously and in competition at the same active site. This is Ribulose bisphosphate carboxylase from Paramagnetospirillum magnetotacticum (Aquaspirillum magnetotacticum).